Here is a 201-residue protein sequence, read N- to C-terminus: Increased recombination centers protein 21 (201 aa).

The Cytochrome b5 heme-binding domain occupies 122 to 200 (PLRINRKIVK…LQVCFIGVVC (79 aa)). Heme-binding residues include histidine 158 and histidine 182.

The protein belongs to the cytochrome b5 family.

Involved in resistance to carboplatin and cisplatin. Is probably involved in a pathway contributing to genomic integrity. The chain is Increased recombination centers protein 21 (IRC21) from Saccharomyces cerevisiae (strain ATCC 204508 / S288c) (Baker's yeast).